Here is a 339-residue protein sequence, read N- to C-terminus: Replication factor C subunit 4 (339 aa).

49 to 56 (GPPGTGKT) lines the ATP pocket.

Belongs to the activator 1 small subunits family. Heterotetramer of subunits RFC2, RFC3, RFC4 and RFC5 that can form a complex with RFC1.

It localises to the nucleus. In terms of biological role, may be involved in DNA replication and thus regulate cell proliferation. The sequence is that of Replication factor C subunit 4 (RFC4) from Arabidopsis thaliana (Mouse-ear cress).